Here is a 130-residue protein sequence, read N- to C-terminus: Sulfurtransferase TusD (130 aa).

Cys-80 acts as the Cysteine persulfide intermediate in catalysis.

It belongs to the DsrE/TusD family. In terms of assembly, heterohexamer, formed by a dimer of trimers. The hexameric TusBCD complex contains 2 copies each of TusB, TusC and TusD. The TusBCD complex interacts with TusE.

It localises to the cytoplasm. Part of a sulfur-relay system required for 2-thiolation of 5-methylaminomethyl-2-thiouridine (mnm(5)s(2)U) at tRNA wobble positions. Accepts sulfur from TusA and transfers it in turn to TusE. This Proteus mirabilis (strain HI4320) protein is Sulfurtransferase TusD.